Here is a 267-residue protein sequence, read N- to C-terminus: L-aspartate dehydrogenase (267 aa).

Positions 124 and 190 each coordinate NAD(+). Residue His220 is part of the active site.

Belongs to the L-aspartate dehydrogenase family.

The enzyme catalyses L-aspartate + NADP(+) + H2O = oxaloacetate + NH4(+) + NADPH + H(+). It catalyses the reaction L-aspartate + NAD(+) + H2O = oxaloacetate + NH4(+) + NADH + H(+). Its pathway is cofactor biosynthesis; NAD(+) biosynthesis; iminoaspartate from L-aspartate (dehydrogenase route): step 1/1. Its function is as follows. Specifically catalyzes the NAD or NADP-dependent dehydrogenation of L-aspartate to iminoaspartate. This is L-aspartate dehydrogenase from Pseudomonas aeruginosa (strain ATCC 15692 / DSM 22644 / CIP 104116 / JCM 14847 / LMG 12228 / 1C / PRS 101 / PAO1).